A 102-amino-acid polypeptide reads, in one-letter code: Putative RNA-binding protein RbpA (102 aa).

Positions Ser-2–Pro-79 constitute an RRM domain. Positions Lys-73 to Gly-84 are enriched in basic and acidic residues. The segment at Lys-73–Tyr-102 is disordered. Gly residues predominate over residues Pro-85–Tyr-102.

This chain is Putative RNA-binding protein RbpA (rbpA), found in Nostoc sp. (strain PCC 7120 / SAG 25.82 / UTEX 2576).